The following is a 421-amino-acid chain: Serine hydroxymethyltransferase (421 aa).

(6S)-5,6,7,8-tetrahydrofolate is bound by residues Leu-121 and Gly-125–Leu-127. Lys-230 is subject to N6-(pyridoxal phosphate)lysine. (6S)-5,6,7,8-tetrahydrofolate is bound at residue Ser-355–Phe-357.

Belongs to the SHMT family. In terms of assembly, homodimer. Pyridoxal 5'-phosphate is required as a cofactor.

It localises to the cytoplasm. It carries out the reaction (6R)-5,10-methylene-5,6,7,8-tetrahydrofolate + glycine + H2O = (6S)-5,6,7,8-tetrahydrofolate + L-serine. It participates in one-carbon metabolism; tetrahydrofolate interconversion. The protein operates within amino-acid biosynthesis; glycine biosynthesis; glycine from L-serine: step 1/1. In terms of biological role, catalyzes the reversible interconversion of serine and glycine with tetrahydrofolate (THF) serving as the one-carbon carrier. This reaction serves as the major source of one-carbon groups required for the biosynthesis of purines, thymidylate, methionine, and other important biomolecules. Also exhibits THF-independent aldolase activity toward beta-hydroxyamino acids, producing glycine and aldehydes, via a retro-aldol mechanism. The polypeptide is Serine hydroxymethyltransferase (Psychromonas ingrahamii (strain DSM 17664 / CCUG 51855 / 37)).